The sequence spans 581 residues: Arginine--tRNA ligase (581 aa).

A 'HIGH' region motif is present at residues 126–136 (PNLAKEMHVGH).

The protein belongs to the class-I aminoacyl-tRNA synthetase family. Monomer.

It localises to the cytoplasm. It catalyses the reaction tRNA(Arg) + L-arginine + ATP = L-arginyl-tRNA(Arg) + AMP + diphosphate. The sequence is that of Arginine--tRNA ligase from Shewanella woodyi (strain ATCC 51908 / MS32).